We begin with the raw amino-acid sequence, 404 residues long: Probable tRNA sulfurtransferase (404 aa).

The region spanning 60–165 is the THUMP domain; that stretch reads TAVAESLKQV…EEAAYLSYET (106 aa). Residues 183–184, 208–209, Arg-265, Gly-287, and Gln-296 each bind ATP; these read ML and HF.

This sequence belongs to the ThiI family.

It localises to the cytoplasm. The catalysed reaction is [ThiI sulfur-carrier protein]-S-sulfanyl-L-cysteine + a uridine in tRNA + 2 reduced [2Fe-2S]-[ferredoxin] + ATP + H(+) = [ThiI sulfur-carrier protein]-L-cysteine + a 4-thiouridine in tRNA + 2 oxidized [2Fe-2S]-[ferredoxin] + AMP + diphosphate. It catalyses the reaction [ThiS sulfur-carrier protein]-C-terminal Gly-Gly-AMP + S-sulfanyl-L-cysteinyl-[cysteine desulfurase] + AH2 = [ThiS sulfur-carrier protein]-C-terminal-Gly-aminoethanethioate + L-cysteinyl-[cysteine desulfurase] + A + AMP + 2 H(+). It participates in cofactor biosynthesis; thiamine diphosphate biosynthesis. In terms of biological role, catalyzes the ATP-dependent transfer of a sulfur to tRNA to produce 4-thiouridine in position 8 of tRNAs, which functions as a near-UV photosensor. Also catalyzes the transfer of sulfur to the sulfur carrier protein ThiS, forming ThiS-thiocarboxylate. This is a step in the synthesis of thiazole, in the thiamine biosynthesis pathway. The sulfur is donated as persulfide by IscS. The chain is Probable tRNA sulfurtransferase from Streptococcus pneumoniae (strain 70585).